Reading from the N-terminus, the 153-residue chain is UPF0260 protein YcgN (153 aa).

The protein belongs to the UPF0260 family.

The sequence is that of UPF0260 protein YcgN from Shigella boydii serotype 18 (strain CDC 3083-94 / BS512).